The following is a 199-amino-acid chain: MVKMAESLFTIFLEGVFIKNFLLIQFLGLCSFVGVTKDLKSASGMSGAVVFVMAMAATVSFALYNFILVPLKLEFLRTIAFIVVIAALVQLVEFIVRKHVPALYRSLGIYLPLITTNCAVLGAVLLNVMNDYDLAQSVVFGVAAGLGYTVAMLMMAAIRERSDLVEVPKSVGRGVTYAFFIATIMSMSFVNFFGVIPLE.

The next 6 membrane-spanning stretches (helical) occupy residues 8-28, 49-69, 75-95, 106-126, 138-158, and 178-198; these read LFTI…QFLG, VVFV…FILV, FLRT…VEFI, SLGI…AVLL, VVFG…MAAI, and AFFI…VIPL.

It belongs to the NqrDE/RnfAE family. The Rnf complex is probably composed of eight subunits, including RnfA, RnfB, RnfC, RnfD, RnfE and RnfG.

It localises to the cell membrane. Part of a membrane-bound complex that couples electron transfer with translocation of ions across the membrane. Catalyzes Na(+) transport, most probably coupled to electron transfer from reduced ferredoxin to methanophenazine and heterodisulfide reductase. Involved in heterodisulfide reduction during methanogenesis from acetate. The protein is Ion-translocating oxidoreductase complex subunit A of Methanosarcina acetivorans (strain ATCC 35395 / DSM 2834 / JCM 12185 / C2A).